A 289-amino-acid chain; its full sequence is Dehydrodolichyl diphosphate synthase 4 (289 aa).

Residues 2–22 (LSMLWFLLSLLSLLLLPCLRP) traverse the membrane as a helical segment.

Belongs to the UPP synthase family. Requires Mg(2+) as cofactor.

The protein resides in the endoplasmic reticulum membrane. It participates in protein modification; protein glycosylation. Catalyzes cis-prenyl chain elongation to produce the polyprenyl backbone of dolichol, a glycosyl carrier-lipid required for the biosynthesis of several classes of glycoprotein. The chain is Dehydrodolichyl diphosphate synthase 4 from Arabidopsis thaliana (Mouse-ear cress).